We begin with the raw amino-acid sequence, 119 residues long: Large ribosomal subunit protein bL20 (119 aa).

This sequence belongs to the bacterial ribosomal protein bL20 family.

In terms of biological role, binds directly to 23S ribosomal RNA and is necessary for the in vitro assembly process of the 50S ribosomal subunit. It is not involved in the protein synthesizing functions of that subunit. In Nitrosococcus oceani (strain ATCC 19707 / BCRC 17464 / JCM 30415 / NCIMB 11848 / C-107), this protein is Large ribosomal subunit protein bL20.